Consider the following 137-residue polypeptide: Basic phospholipase A2 beta-bungarotoxin A-AL4 chain (137 aa).

An N-terminal signal peptide occupies residues 1 to 10; that stretch reads LAVCVSLLGA. A propeptide spanning residues 11-18 is cleaved from the precursor; that stretch reads ANIPPQHL. Disulfide bonds link Cys-45–Cys-137, Cys-47–Cys-63, Cys-62–Cys-118, Cys-69–Cys-111, Cys-79–Cys-104, and Cys-97–Cys-109. 3 residues coordinate Ca(2+): Tyr-46, Gly-48, and Gly-50. The active site involves His-66. A Ca(2+)-binding site is contributed by Asp-67. Residue Asp-112 is part of the active site.

This sequence belongs to the phospholipase A2 family. Group I subfamily. D49 sub-subfamily. In terms of assembly, heterodimer; disulfide-linked. The A chains have phospholipase A2 activity and the B chains show homology with the basic protease inhibitors. It depends on Ca(2+) as a cofactor. Expressed by the venom gland.

It is found in the secreted. It carries out the reaction a 1,2-diacyl-sn-glycero-3-phosphocholine + H2O = a 1-acyl-sn-glycero-3-phosphocholine + a fatty acid + H(+). Its function is as follows. Snake venom phospholipase A2 (PLA2) that inhibits neuromuscular transmission by blocking acetylcholine release from the nerve termini. PLA2 catalyzes the calcium-dependent hydrolysis of the 2-acyl groups in 3-sn-phosphoglycerides. In Bungarus multicinctus (Many-banded krait), this protein is Basic phospholipase A2 beta-bungarotoxin A-AL4 chain.